The sequence spans 512 residues: Protein singed (512 aa).

Belongs to the fascin family. In terms of assembly, interacts with Rab35, with stronger binding to the Rab35-GTP form compared to the Rab35-GDP form.

The protein resides in the cytoplasm. It is found in the cytoskeleton. Its function is as follows. Acts as an actin bundling protein. May have a role in the asymmetric organization and/or movement of cytoplasmic components. It has a role in somatic cells during the formation of adult bristles and hairs, and in the female germline during oogenesis. The sequence is that of Protein singed (sn) from Drosophila melanogaster (Fruit fly).